The following is a 420-amino-acid chain: 3-isopropylmalate dehydratase large subunit (420 aa).

[4Fe-4S] cluster contacts are provided by C300, C360, and C363.

This sequence belongs to the aconitase/IPM isomerase family. LeuC type 2 subfamily. As to quaternary structure, heterodimer of LeuC and LeuD. [4Fe-4S] cluster serves as cofactor.

The enzyme catalyses (2R,3S)-3-isopropylmalate = (2S)-2-isopropylmalate. The protein operates within amino-acid biosynthesis; L-leucine biosynthesis; L-leucine from 3-methyl-2-oxobutanoate: step 2/4. In terms of biological role, catalyzes the isomerization between 2-isopropylmalate and 3-isopropylmalate, via the formation of 2-isopropylmaleate. The polypeptide is 3-isopropylmalate dehydratase large subunit (Clostridium kluyveri (strain ATCC 8527 / DSM 555 / NBRC 12016 / NCIMB 10680 / K1)).